Here is a 482-residue protein sequence, read N- to C-terminus: tRNA sulfurtransferase (482 aa).

Residues 61–165 (LAIRDALTRI…DDRLLLIKGR (105 aa)) form the THUMP domain. Residues 183–184 (LI), lysine 265, glycine 287, and glutamine 296 each bind ATP. Cysteine 344 and cysteine 456 are disulfide-bonded. A Rhodanese domain is found at 404–482 (FGPNDVILDI…GFNNVKVYRP (79 aa)). The active-site Cysteine persulfide intermediate is the cysteine 456.

It belongs to the ThiI family.

The protein localises to the cytoplasm. It carries out the reaction [ThiI sulfur-carrier protein]-S-sulfanyl-L-cysteine + a uridine in tRNA + 2 reduced [2Fe-2S]-[ferredoxin] + ATP + H(+) = [ThiI sulfur-carrier protein]-L-cysteine + a 4-thiouridine in tRNA + 2 oxidized [2Fe-2S]-[ferredoxin] + AMP + diphosphate. The catalysed reaction is [ThiS sulfur-carrier protein]-C-terminal Gly-Gly-AMP + S-sulfanyl-L-cysteinyl-[cysteine desulfurase] + AH2 = [ThiS sulfur-carrier protein]-C-terminal-Gly-aminoethanethioate + L-cysteinyl-[cysteine desulfurase] + A + AMP + 2 H(+). It functions in the pathway cofactor biosynthesis; thiamine diphosphate biosynthesis. In terms of biological role, catalyzes the ATP-dependent transfer of a sulfur to tRNA to produce 4-thiouridine in position 8 of tRNAs, which functions as a near-UV photosensor. Also catalyzes the transfer of sulfur to the sulfur carrier protein ThiS, forming ThiS-thiocarboxylate. This is a step in the synthesis of thiazole, in the thiamine biosynthesis pathway. The sulfur is donated as persulfide by IscS. The protein is tRNA sulfurtransferase of Escherichia coli (strain 55989 / EAEC).